Reading from the N-terminus, the 172-residue chain is Cytidylate kinase (172 aa).

An ATP-binding site is contributed by 7–15 (GPPGSGTST).

Belongs to the cytidylate kinase family. Type 2 subfamily.

The protein localises to the cytoplasm. It carries out the reaction CMP + ATP = CDP + ADP. The catalysed reaction is dCMP + ATP = dCDP + ADP. The protein is Cytidylate kinase of Methanothrix thermoacetophila (strain DSM 6194 / JCM 14653 / NBRC 101360 / PT) (Methanosaeta thermophila).